Reading from the N-terminus, the 436-residue chain is Suppressor of cytokine signaling 4 (436 aa).

Positions 1-25 are disordered; the sequence is MAENNSKNVDVRPKTSRSRSADRKD. Basic and acidic residues predominate over residues 9–25; that stretch reads VDVRPKTSRSRSADRKD. Residues 283-378 enclose the SH2 domain; that stretch reads CYWGVMDKYA…FFEPLLSTPL (96 aa). The region spanning 373 to 422 is the SOCS box domain; the sequence is LLSTPLIRTFPFSLQHICRTVICNCTTYDGIDALPIPSPMKLYLKEYHYK.

It participates in protein modification; protein ubiquitination. Its function is as follows. SOCS family proteins form part of a classical negative feedback system that regulates cytokine signal transduction. Substrate-recognition component of a SCF-like ECS (Elongin BC-CUL2/5-SOCS-box protein) E3 ubiquitin-protein ligase complex which mediates the ubiquitination and subsequent proteasomal degradation of target proteins. Inhibits EGF signaling by mediating the degradation of the Tyr-phosphorylated EGF receptor/EGFR. The chain is Suppressor of cytokine signaling 4 (Socs4) from Mus musculus (Mouse).